The sequence spans 81 residues: Photosystem I iron-sulfur center (81 aa).

2 consecutive 4Fe-4S ferredoxin-type domains span residues 2 to 31 (AHSV…MIPW) and 39 to 68 (IASA…VRVY). Residues cysteine 11, cysteine 14, cysteine 17, cysteine 21, cysteine 48, cysteine 51, cysteine 54, and cysteine 58 each coordinate [4Fe-4S] cluster.

The eukaryotic PSI reaction center is composed of at least 11 subunits. The cofactor is [4Fe-4S] cluster.

It localises to the plastid. Its subcellular location is the chloroplast thylakoid membrane. The catalysed reaction is reduced [plastocyanin] + hnu + oxidized [2Fe-2S]-[ferredoxin] = oxidized [plastocyanin] + reduced [2Fe-2S]-[ferredoxin]. Functionally, apoprotein for the two 4Fe-4S centers FA and FB of photosystem I (PSI); essential for photochemical activity. FB is the terminal electron acceptor of PSI, donating electrons to ferredoxin. The C-terminus interacts with PsaA/B/D and helps assemble the protein into the PSI complex. Required for binding of PsaD and PsaE to PSI. PSI is a plastocyanin-ferredoxin oxidoreductase, converting photonic excitation into a charge separation, which transfers an electron from the donor P700 chlorophyll pair to the spectroscopically characterized acceptors A0, A1, FX, FA and FB in turn. This Pinus thunbergii (Japanese black pine) protein is Photosystem I iron-sulfur center.